Consider the following 144-residue polypeptide: Bacilliredoxin BCE_2233 (144 aa).

This sequence belongs to the bacilliredoxin family.

This Bacillus cereus (strain ATCC 10987 / NRS 248) protein is Bacilliredoxin BCE_2233.